Reading from the N-terminus, the 168-residue chain is Crossover junction endodeoxyribonuclease RuvC (168 aa).

Residues Asp8, Glu68, and Asp140 contribute to the active site. Mg(2+)-binding residues include Asp8, Glu68, and Asp140.

It belongs to the RuvC family. Homodimer which binds Holliday junction (HJ) DNA. The HJ becomes 2-fold symmetrical on binding to RuvC with unstacked arms; it has a different conformation from HJ DNA in complex with RuvA. In the full resolvosome a probable DNA-RuvA(4)-RuvB(12)-RuvC(2) complex forms which resolves the HJ. Requires Mg(2+) as cofactor.

The protein localises to the cytoplasm. The catalysed reaction is Endonucleolytic cleavage at a junction such as a reciprocal single-stranded crossover between two homologous DNA duplexes (Holliday junction).. The RuvA-RuvB-RuvC complex processes Holliday junction (HJ) DNA during genetic recombination and DNA repair. Endonuclease that resolves HJ intermediates. Cleaves cruciform DNA by making single-stranded nicks across the HJ at symmetrical positions within the homologous arms, yielding a 5'-phosphate and a 3'-hydroxyl group; requires a central core of homology in the junction. The consensus cleavage sequence is 5'-(A/T)TT(C/G)-3'. Cleavage occurs on the 3'-side of the TT dinucleotide at the point of strand exchange. HJ branch migration catalyzed by RuvA-RuvB allows RuvC to scan DNA until it finds its consensus sequence, where it cleaves and resolves the cruciform DNA. In Gluconacetobacter diazotrophicus (strain ATCC 49037 / DSM 5601 / CCUG 37298 / CIP 103539 / LMG 7603 / PAl5), this protein is Crossover junction endodeoxyribonuclease RuvC.